Consider the following 537-residue polypeptide: Bifunctional purine biosynthesis protein PurH (537 aa).

Positions 8 to 158 (IPAPDLVPVR…KNHAYVAVVT (151 aa)) constitute an MGS-like domain.

This sequence belongs to the PurH family.

The catalysed reaction is (6R)-10-formyltetrahydrofolate + 5-amino-1-(5-phospho-beta-D-ribosyl)imidazole-4-carboxamide = 5-formamido-1-(5-phospho-D-ribosyl)imidazole-4-carboxamide + (6S)-5,6,7,8-tetrahydrofolate. It catalyses the reaction IMP + H2O = 5-formamido-1-(5-phospho-D-ribosyl)imidazole-4-carboxamide. It functions in the pathway purine metabolism; IMP biosynthesis via de novo pathway; 5-formamido-1-(5-phospho-D-ribosyl)imidazole-4-carboxamide from 5-amino-1-(5-phospho-D-ribosyl)imidazole-4-carboxamide (10-formyl THF route): step 1/1. It participates in purine metabolism; IMP biosynthesis via de novo pathway; IMP from 5-formamido-1-(5-phospho-D-ribosyl)imidazole-4-carboxamide: step 1/1. This Chelativorans sp. (strain BNC1) protein is Bifunctional purine biosynthesis protein PurH.